The following is a 444-amino-acid chain: Phosphoglucosamine mutase (444 aa).

Ser-104 (phosphoserine intermediate) is an active-site residue. Mg(2+)-binding residues include Ser-104, Asp-243, Asp-245, and Asp-247. Ser-104 carries the phosphoserine modification.

This sequence belongs to the phosphohexose mutase family. It depends on Mg(2+) as a cofactor. In terms of processing, activated by phosphorylation.

It catalyses the reaction alpha-D-glucosamine 1-phosphate = D-glucosamine 6-phosphate. In terms of biological role, catalyzes the conversion of glucosamine-6-phosphate to glucosamine-1-phosphate. The sequence is that of Phosphoglucosamine mutase from Neisseria meningitidis serogroup C (strain 053442).